A 579-amino-acid polypeptide reads, in one-letter code: Fatty-acid amide hydrolase 1 (579 aa).

The chain crosses the membrane as a helical span at residues 9–29 (TLSGVSGVCLACSLLSAAVVL). Over 30–403 (RWTGRQKARG…GDFVDPCLGD (374 aa)) the chain is Cytoplasmic. K142 acts as the Charge relay system in catalysis. Residues M191, S217, and 238–241 (IGGS) each bind substrate. S217 functions as the Charge relay system in the catalytic mechanism. S241 serves as the catalytic Acyl-ester intermediate. Residue S241 is modified to Phosphoserine. Residues 404 to 433 (LILILRLPSWFKRLLSLLLKPLFPRLAAFL) lie within the membrane without spanning it. At 434 to 579 (NSMRPRSAEK…QLMTPQKQPS (146 aa)) the chain is on the cytoplasmic side.

It belongs to the amidase family. As to quaternary structure, homodimer. Found in neuronal cells throughout the CNS. Expressed in liver and brain, and to a lesser extent in spleen, lung, kidney and testes.

It localises to the endoplasmic reticulum membrane. The protein localises to the golgi apparatus membrane. The enzyme catalyses N-(5Z,8Z,11Z,14Z-eicosatetraenoyl)-ethanolamine + H2O = ethanolamine + (5Z,8Z,11Z,14Z)-eicosatetraenoate. The catalysed reaction is (9Z)-octadecenamide + H2O = (9Z)-octadecenoate + NH4(+). It catalyses the reaction 2-(5Z,8Z,11Z,14Z-eicosatetraenoyl)-glycerol + H2O = glycerol + (5Z,8Z,11Z,14Z)-eicosatetraenoate + H(+). It carries out the reaction (9Z,12Z,15Z)-octadecatrienamide + H2O = (9Z,12Z,15Z)-octadecatrienoate + NH4(+). The enzyme catalyses (5Z,8Z,11Z,14Z)-eicosatetraenamide + H2O = (5Z,8Z,11Z,14Z)-eicosatetraenoate + NH4(+). The catalysed reaction is (6Z)-octadecenamide + H2O = (6Z)-octadecenoate + NH4(+). It catalyses the reaction (15Z)-tetracosenamide + H2O = (15Z)-tetracosenoate + NH4(+). It carries out the reaction (8Z,11Z,14Z)-eicosatrienamide + H2O = (8Z,11Z,14Z)-eicosatrienoate + NH4(+). The enzyme catalyses (11Z,14Z,17Z)-eicosatrienamide + H2O = (11Z,14Z,17Z)-eicosatrienoate + NH4(+). The catalysed reaction is (11Z,14Z)-eicosadienamide + H2O = (11Z,14Z)-eicosadienoate + NH4(+). It catalyses the reaction (9Z,12Z)-octadecadienamide + H2O = (9Z,12Z)-octadecadienoate + NH4(+). It carries out the reaction tetradecamide + H2O = tetradecanoate + NH4(+). The enzyme catalyses N-(9Z-octadecenoyl) ethanolamine + H2O = ethanolamine + (9Z)-octadecenoate. The catalysed reaction is N-(9Z-octadecenoyl)-taurine + H2O = taurine + (9Z)-octadecenoate. It catalyses the reaction 1-O-methyl-(5Z,8Z,11Z,14Z)-eicosatetraenoate + H2O = methanol + (5Z,8Z,11Z,14Z)-eicosatetraenoate + H(+). It carries out the reaction (11Z)-eicosenamide + H2O = (11Z)-eicosenoate + NH4(+). The enzyme catalyses N-(9Z-hexadecenoyl) ethanolamine + H2O = (9Z)-hexadecenoate + ethanolamine. The catalysed reaction is N-octadecanoyl ethanolamine + H2O = octadecanoate + ethanolamine. It catalyses the reaction N-docosanoyl-ethanolamine + H2O = docosanoate + ethanolamine. It carries out the reaction N-tetracosanoyl-taurine + H2O = tetracosanoate + taurine. The enzyme catalyses N-(15Z-tetracosenoyl)-ethanolamine + H2O = (15Z)-tetracosenoate + ethanolamine. The catalysed reaction is N-docosanoyl-taurine + H2O = docosanoate + taurine. It catalyses the reaction N-(15Z-tetracosenoyl)-taurine + H2O = (15Z)-tetracosenoate + taurine. It carries out the reaction N-tricosanoyl-taurine + H2O = tricosanoate + taurine. The enzyme catalyses (9Z)-octadecenoate + glycine = N-(9Z-octadecenoyl)glycine + H2O. The catalysed reaction is N-(5Z,8Z,11Z,14Z)-eicosatetraenoyl-glycine + H2O = (5Z,8Z,11Z,14Z)-eicosatetraenoate + glycine. It catalyses the reaction N-(5Z,8Z,11Z,14Z-eicosatetraenoyl)-L-serine + H2O = (5Z,8Z,11Z,14Z)-eicosatetraenoate + L-serine. Inhibited by trifluoromethyl ketone. Its function is as follows. Catalyzes the hydrolysis of endogenous amidated lipids like the sleep-inducing lipid oleamide ((9Z)-octadecenamide), the endocannabinoid anandamide (N-(5Z,8Z,11Z,14Z-eicosatetraenoyl)-ethanolamine), as well as other fatty amides, to their corresponding fatty acids, thereby regulating the signaling functions of these molecules. Hydrolyzes polyunsaturated substrate anandamide preferentially as compared to monounsaturated substrates. It can also catalyze the hydrolysis of the endocannabinoid 2-arachidonoylglycerol (2-(5Z,8Z,11Z,14Z-eicosatetraenoyl)-glycerol). FAAH cooperates with PM20D1 in the hydrolysis of amino acid-conjugated fatty acids such as N-fatty acyl glycine and N-fatty acyl-L-serine, thereby acting as a physiological regulator of specific subsets of intracellular, but not of extracellular, N-fatty acyl amino acids. The polypeptide is Fatty-acid amide hydrolase 1 (Faah) (Rattus norvegicus (Rat)).